The sequence spans 451 residues: Bifunctional protein GlmU (451 aa).

A pyrophosphorylase region spans residues 1-225 (MVVVAILAAG…YQEILGINDR (225 aa)). UDP-N-acetyl-alpha-D-glucosamine-binding positions include 7–10 (LAAG), Lys-21, Gln-72, and 77–78 (GT). Residue Asp-102 participates in Mg(2+) binding. The UDP-N-acetyl-alpha-D-glucosamine site is built by Gly-139, Glu-154, Asn-169, and Asn-223. Asn-223 contributes to the Mg(2+) binding site. Positions 226-246 (LQLATAYEILQRRVKEQWMMA) are linker. The segment at 247 to 451 (GVTLIDPNSI…LGWRRKSGES (205 aa)) is N-acetyltransferase. UDP-N-acetyl-alpha-D-glucosamine contacts are provided by Arg-328 and Lys-346. The Proton acceptor role is filled by His-358. Residues Tyr-361 and Asn-372 each coordinate UDP-N-acetyl-alpha-D-glucosamine. Acetyl-CoA is bound by residues Ala-375, 381–382 (NY), Ser-400, Ala-418, and Arg-435.

The protein in the N-terminal section; belongs to the N-acetylglucosamine-1-phosphate uridyltransferase family. In the C-terminal section; belongs to the transferase hexapeptide repeat family. As to quaternary structure, homotrimer. The cofactor is Mg(2+).

The protein resides in the cytoplasm. The catalysed reaction is alpha-D-glucosamine 1-phosphate + acetyl-CoA = N-acetyl-alpha-D-glucosamine 1-phosphate + CoA + H(+). It catalyses the reaction N-acetyl-alpha-D-glucosamine 1-phosphate + UTP + H(+) = UDP-N-acetyl-alpha-D-glucosamine + diphosphate. The protein operates within nucleotide-sugar biosynthesis; UDP-N-acetyl-alpha-D-glucosamine biosynthesis; N-acetyl-alpha-D-glucosamine 1-phosphate from alpha-D-glucosamine 6-phosphate (route II): step 2/2. Its pathway is nucleotide-sugar biosynthesis; UDP-N-acetyl-alpha-D-glucosamine biosynthesis; UDP-N-acetyl-alpha-D-glucosamine from N-acetyl-alpha-D-glucosamine 1-phosphate: step 1/1. It participates in bacterial outer membrane biogenesis; LPS lipid A biosynthesis. Functionally, catalyzes the last two sequential reactions in the de novo biosynthetic pathway for UDP-N-acetylglucosamine (UDP-GlcNAc). The C-terminal domain catalyzes the transfer of acetyl group from acetyl coenzyme A to glucosamine-1-phosphate (GlcN-1-P) to produce N-acetylglucosamine-1-phosphate (GlcNAc-1-P), which is converted into UDP-GlcNAc by the transfer of uridine 5-monophosphate (from uridine 5-triphosphate), a reaction catalyzed by the N-terminal domain. In Nostoc sp. (strain PCC 7120 / SAG 25.82 / UTEX 2576), this protein is Bifunctional protein GlmU.